We begin with the raw amino-acid sequence, 196 residues long: Macrophage infectivity potentiator (196 aa).

The signal sequence occupies residues 1-29; it reads MHRENYFSKIAFCLLGVLFLSCITSVQTV. The PPIase FKBP-type domain occupies 85-171; that stretch reads DDKCEVHYTG…EFDVELISIK (87 aa).

The protein belongs to the FKBP-type PPIase family.

It localises to the secreted. Its subcellular location is the extracellular space. It carries out the reaction [protein]-peptidylproline (omega=180) = [protein]-peptidylproline (omega=0). Strongly inhibited by FK506 and L-685,818. Functionally, essential virulence factor associated with macrophage infectivity. Exhibits PPIase activity. In Trypanosoma cruzi, this protein is Macrophage infectivity potentiator (MIP).